Here is a 448-residue protein sequence, read N- to C-terminus: Enolase (448 aa).

Position 164 (Gln164) interacts with (2R)-2-phosphoglycerate. Glu206 functions as the Proton donor in the catalytic mechanism. The Mg(2+) site is built by Asp243, Glu289, and Asp316. (2R)-2-phosphoglycerate-binding residues include Lys341, Arg370, Ser371, and Lys392. Lys341 (proton acceptor) is an active-site residue.

Belongs to the enolase family. Requires Mg(2+) as cofactor.

The protein resides in the cytoplasm. It is found in the secreted. The protein localises to the cell surface. The catalysed reaction is (2R)-2-phosphoglycerate = phosphoenolpyruvate + H2O. Its pathway is carbohydrate degradation; glycolysis; pyruvate from D-glyceraldehyde 3-phosphate: step 4/5. In terms of biological role, catalyzes the reversible conversion of 2-phosphoglycerate (2-PG) into phosphoenolpyruvate (PEP). It is essential for the degradation of carbohydrates via glycolysis. The protein is Enolase of Oenococcus oeni (strain ATCC BAA-331 / PSU-1).